The chain runs to 647 residues: Endogenous retrovirus group K member 8 Gag polyprotein (647 aa).

Glycine 2 carries N-myristoyl glycine lipidation. A disordered region spans residues 165 to 264; sequence GKGPELVGPS…APPSRQGSEL (100 aa). Pro residues predominate over residues 232–247; sequence GMPPAPQGREPYPQPP. CCHC-type zinc fingers lie at residues 544 to 561 and 580 to 597; these read GKCYNCGQIGHLKKNCPV and DLCPRCKKGKHWASQCRS. Residues 598 to 641 are disordered; sequence KFDKNGQPLSGNEQRGQPQAPQQTGAFPIQPFVPQGFQDNNPHC. Polar residues predominate over residues 604-622; sequence QPLSGNEQRGQPQAPQQTG.

Belongs to the beta type-B retroviral Gag protein family. HERV class-II K(HML-2) gag subfamily. In terms of processing, myristoylation is essential for retroviral assembly. Alteration of the glycine residue leads to a block in the budding of particles and an accumulation of Gag inside the cell. Post-translationally, specific enzymatic cleavages may yield mature proteins.

It is found in the cell membrane. In terms of biological role, the products of the Gag polyproteins of infectious retroviruses perform highly complex orchestrated tasks during the assembly, budding, maturation, and infection stages of the viral replication cycle. During viral assembly, the proteins form membrane associations and self-associations that ultimately result in budding of an immature virion from the infected cell. Gag precursors also function during viral assembly to selectively bind and package two plus strands of genomic RNA. Endogenous Gag proteins may have kept, lost or modified their original function during evolution. This chain is Endogenous retrovirus group K member 8 Gag polyprotein (ERVK-8), found in Homo sapiens (Human).